The following is a 477-amino-acid chain: MSGGGNLLTLERDHFKYLFLTSYFDLKDNEHVPSEPMAFIRNYLNCTFDLLDDAVLMNYFNYLQSMQLKHLVGSTSTNIFKFVKPQFRFVCDRTTVDILEFDTRMYIKPGTPVYATNLFTSNPRKMMAFLYAEFGKVFKNKIFVNINNYGCVLAGSAGFLFDDAYVDWNGVRMCAAPRLDNNMHPFRLYLLGEDMAKHFVDNNILPPHPSNAKTRKINNSMFMLKNFYKGLPLFKSKYTVVNSTKIVTRKPNDIFNEIDKELNGNCPFIKFIQRDYIFDAQFPPDLLDLLNEYMTKSSIMKIITKFVIEENPAMSGEMSREIILDRYSVDNYRKLYIKMEITNQFPVMYDHESSYIFVSKDFLQLKGTMNAFYAPKQRILSILAVNRLFGATETIDFHPNLLVYRQSSPPVRLTGDVYVVDKNEKVFLVKHVFSNTVPAYLLIRGDYESSSDLKSLRDLNPWVQNTLLKLLIPDSVQ.

The protein localises to the host cytoplasm. The protein resides in the host nucleus. It is found in the virion. Required for occlusion-derived virus (ODV) envelopment and subsequent embedding of virions into polyhedra. This is Protein AC142 (ORF142) from Autographa californica nuclear polyhedrosis virus (AcMNPV).